Here is a 393-residue protein sequence, read N- to C-terminus: Elongation factor Tu (393 aa).

The region spanning 10–203 is the tr-type G domain; that stretch reads KPHVNIGTIG…AVDDYIPEPV (194 aa). The tract at residues 19 to 26 is G1; sequence GHVDHGKT. 19–26 lines the GTP pocket; sequence GHVDHGKT. A Mg(2+)-binding site is contributed by Thr-26. The segment at 60–64 is G2; that stretch reads GITIS. A G3 region spans residues 81-84; it reads DCPG. Residues 81 to 85 and 136 to 139 each bind GTP; these read DCPGH and NKVD. The G4 stretch occupies residues 136–139; the sequence is NKVD. The interval 173–175 is G5; sequence SAL.

It belongs to the TRAFAC class translation factor GTPase superfamily. Classic translation factor GTPase family. EF-Tu/EF-1A subfamily. Monomer.

The protein resides in the cytoplasm. The catalysed reaction is GTP + H2O = GDP + phosphate + H(+). Its function is as follows. GTP hydrolase that promotes the GTP-dependent binding of aminoacyl-tRNA to the A-site of ribosomes during protein biosynthesis. In Chlorobaculum parvum (strain DSM 263 / NCIMB 8327) (Chlorobium vibrioforme subsp. thiosulfatophilum), this protein is Elongation factor Tu.